The primary structure comprises 553 residues: Dihydrolipoyllysine-residue acetyltransferase component of pyruvate dehydrogenase complex (553 aa).

Positions 2-77 (AFSVQMPALG…EVGGELAVIG (76 aa)) constitute a Lipoyl-binding 1 domain. Residue Lys43 is modified to N6-lipoyllysine. The tract at residues 81 to 125 (DAGEAAAPAPEKVPAAQPESKPAPEPPPVQPTSGAPAGGDAKPVL) is disordered. Residues 84–100 (EAAAPAPEKVPAAQPES) show a composition bias toward low complexity. A compositionally biased stretch (pro residues) spans 101 to 110 (KPAPEPPPVQ). Residues 121–196 (AKPVLMPELG…PVGGELARIG (76 aa)) form the Lipoyl-binding 2 domain. At Lys162 the chain carries N6-lipoyllysine. 2 disordered regions span residues 204–238 (APAP…AGAA) and 278–321 (AAAE…TQKA). Over residues 206–232 (APKPAPKPVPEPAPTPKAEPAPSPPAA) the composition is skewed to pro residues. Positions 243 to 280 (YVTPLVRKLASENNIDLAGVTGTGVGGRIRKQDVLAAA) constitute a Peripheral subunit-binding (PSBD) domain. Residues 288-300 (APAPAAQAAAAPA) are compositionally biased toward low complexity. Active-site residues include His523 and Asp527.

Belongs to the 2-oxoacid dehydrogenase family. Forms a 24-polypeptide structural core with octahedral symmetry. Part of the PDH complex, consisting of multiple copies of AceE (E1), DlaT (E2) and Lpd (E3). The cofactor is (R)-lipoate.

The enzyme catalyses N(6)-[(R)-dihydrolipoyl]-L-lysyl-[protein] + acetyl-CoA = N(6)-[(R)-S(8)-acetyldihydrolipoyl]-L-lysyl-[protein] + CoA. Component of the pyruvate dehydrogenase (PDH) complex, that catalyzes the overall conversion of pyruvate to acetyl-CoA and CO(2). The chain is Dihydrolipoyllysine-residue acetyltransferase component of pyruvate dehydrogenase complex (dlaT) from Mycobacterium bovis (strain ATCC BAA-935 / AF2122/97).